Reading from the N-terminus, the 414-residue chain is Serine/arginine-rich splicing factor SR45 (414 aa).

Disordered regions lie at residues 1–95 and 175–414; these read MAKP…KAVQ and LPPR…PRKT. 2 stretches are compositionally biased toward low complexity: residues 10–34 and 42–60; these read SPSV…SRSI and RSLS…GSRS. Residues 62–69 carry the Nuclear localization signal 1 motif; it reads PRRGKSPA. Ser77 bears the Phosphoserine mark. The RRM domain maps to 98-176; sequence LVLHVDSLSR…KVVKATFTLP (79 aa). Residues 176–191 show a composition bias toward low complexity; sequence PPRQKVSSPPKPVSAA. Positions 205-220 are enriched in basic and acidic residues; that stretch reads DAEKDGGPRRPRETSP. Residues 218 to 219 form a required for isoform 1 function in petal development region; that stretch reads TS. The segment covering 228-243 has biased composition (basic residues); the sequence is PRRRSPLPRRGLSPRR. Residues 229–236 carry the Nuclear localization signal 2 motif; it reads RRRSPLPR. Residue Ser256 is modified to Phosphoserine. Short sequence motifs (nuclear localization signal) lie at residues 284-291, 318-325, and 338-345; these read PRRYRSPP, PRRLRSPP, and IRRPGRSR. Basic residues-rich tracts occupy residues 285–343 and 352–363; these read RRYR…RPGR and RKGRGPAGRRGR. A compositionally biased stretch (low complexity) spans 364–373; that stretch reads SSSYSSSPSP. A Nuclear localization signal 6 motif is present at residues 373–380; the sequence is PRRIPRKI. Residues 375–394 are compositionally biased toward basic residues; that stretch reads RIPRKISRSRSPKRPLRGKR. The segment covering 404–414 has biased composition (pro residues); that stretch reads SPPPPPPPRKT.

It belongs to the splicing factor SR family. SR45 subfamily. Component of the spliceosome. Interacts with AFC2, U2AF35A, U2AF35B, RNU1, SCL33 and SKIP. The interaction with AFC2 depends on phosphorylation status. Interaction with RNU1 defines initial 5' splice sites and interaction with U2AF35B 3' splice sites in the early stage of spliceosome assembly. In terms of processing, phosphorylated by AFC2. The phosphorylation status regulates intranuclear distribution. Especially present in actively growing regions and dividing cells. Mostly expressed in roots (primary and secondary root meristem), shoot apical meristem (SAM), leaf primordia, pollen and inflorescence, and, to a lower extent, in leaves, vascular tissue, hydathode and fruits.

It is found in the nucleus speckle. Its subcellular location is the nucleus. It localises to the nucleoplasm. In terms of biological role, involved in 5' and 3' splicing site selection of introns, and may bridge the 5' and 3' components of the spliceosome. Isoform 1 is required during flower petal development and isoform 2 is involved in root growth. Negatively regulates glucose and abscisic acid (ABA) signaling during early seedling development. Involved in the RNA-directed DNA methylation pathway. Modulates KIN10 stability in response to sugars, probably through the splicing regulation of 5PTASE13, a protein implicated in the proteasomal degradation of KIN10. The polypeptide is Serine/arginine-rich splicing factor SR45 (Arabidopsis thaliana (Mouse-ear cress)).